Consider the following 353-residue polypeptide: Paraneoplastic antigen Ma1 (353 aa).

Belongs to the PNMA family. As to expression, testis- and brain-specific. In some cancer patients, specifically expressed by paraneoplastic tumor cells.

The protein localises to the nucleus. The protein resides in the nucleolus. The protein is Paraneoplastic antigen Ma1 (PNMA1) of Homo sapiens (Human).